Consider the following 569-residue polypeptide: Proline--tRNA ligase (569 aa).

It belongs to the class-II aminoacyl-tRNA synthetase family. ProS type 1 subfamily. Homodimer.

It localises to the cytoplasm. The enzyme catalyses tRNA(Pro) + L-proline + ATP = L-prolyl-tRNA(Pro) + AMP + diphosphate. Functionally, catalyzes the attachment of proline to tRNA(Pro) in a two-step reaction: proline is first activated by ATP to form Pro-AMP and then transferred to the acceptor end of tRNA(Pro). As ProRS can inadvertently accommodate and process non-cognate amino acids such as alanine and cysteine, to avoid such errors it has two additional distinct editing activities against alanine. One activity is designated as 'pretransfer' editing and involves the tRNA(Pro)-independent hydrolysis of activated Ala-AMP. The other activity is designated 'posttransfer' editing and involves deacylation of mischarged Ala-tRNA(Pro). The misacylated Cys-tRNA(Pro) is not edited by ProRS. The polypeptide is Proline--tRNA ligase (Latilactobacillus sakei subsp. sakei (strain 23K) (Lactobacillus sakei subsp. sakei)).